Here is a 328-residue protein sequence, read N- to C-terminus: Beta-agarase C (328 aa).

Positions Met1–Ala17 are cleaved as a signal peptide. Positions Cys18–Asn67 are excised as a propeptide. Residues Leu26 to Asn45 show a composition bias toward basic and acidic residues. The tract at residues Leu26–Glu61 is disordered. Residues Glu46–Asn59 are compositionally biased toward acidic residues. A GH16 domain is found at Tyr70–Glu328. Substrate-binding positions include Trp110, Lys119–Lys129, Lys133–Thr135, Glu188, Glu193, and Arg224. Glu188 functions as the Nucleophile in the catalytic mechanism. Residue Glu193 is the Proton donor of the active site.

The protein belongs to the glycosyl hydrolase 16 family.

The protein localises to the secreted. The enzyme catalyses Hydrolysis of (1-&gt;4)-beta-D-galactosidic linkages in agarose, giving the tetramer as the predominant product.. Cleaves the beta-1,4-linkages between beta-D-galactose and alpha-L-3,6-anhydro-galactose residues in agarose. Cleaves agarose in a random manner with retention of the anomeric-bond configuration, producing beta-anomers that give rise progressively to alpha-anomers when mutarotation takes place. This Zobellia galactanivorans (strain DSM 12802 / CCUG 47099 / CIP 106680 / NCIMB 13871 / Dsij) protein is Beta-agarase C (agaC).